Reading from the N-terminus, the 350-residue chain is Histidinol-phosphate aminotransferase 1 (350 aa).

Lys-210 carries the post-translational modification N6-(pyridoxal phosphate)lysine.

It belongs to the class-II pyridoxal-phosphate-dependent aminotransferase family. Histidinol-phosphate aminotransferase subfamily. As to quaternary structure, homodimer. It depends on pyridoxal 5'-phosphate as a cofactor.

It carries out the reaction L-histidinol phosphate + 2-oxoglutarate = 3-(imidazol-4-yl)-2-oxopropyl phosphate + L-glutamate. The protein operates within amino-acid biosynthesis; L-histidine biosynthesis; L-histidine from 5-phospho-alpha-D-ribose 1-diphosphate: step 7/9. The chain is Histidinol-phosphate aminotransferase 1 from Pseudomonas fluorescens (strain ATCC BAA-477 / NRRL B-23932 / Pf-5).